Here is an 87-residue protein sequence, read N- to C-terminus: MKNPTLLPKLTAPVERPAVTSSDLKQASSVDAAWLNGDNNWSTPFAGVNAAWLNGDNNWSTPFAGVNAAWLNGDNNWSTPFAADGAE.

Positions 1-33 (MKNPTLLPKLTAPVERPAVTSSDLKQASSVDAA) are excised as a propeptide. W34 carries the 3'-prenyl-2',N2-cyclotryptophan; partial lipid modification. Residues 34 to 44 (WLNGDNNWSTP) constitute a cross-link (cyclopeptide (Trp-Pro)). At L35 the chain carries D-leucine; partial. A lipid anchor (3'-prenyl-2',N2-cyclotryptophan; partial) is attached at W41. The propeptide occupies 45-51 (FAGVNAA). The 3'-prenyl-2',N2-cyclotryptophan; partial moiety is linked to residue W52. Positions 52 to 62 (WLNGDNNWSTP) form a cross-link, cyclopeptide (Trp-Pro). Residue L53 is modified to D-leucine; partial. The 3'-prenyl-2',N2-cyclotryptophan; partial moiety is linked to residue W59. A propeptide spanning residues 63 to 69 (FAGVNAA) is cleaved from the precursor. The 3'-prenyl-2',N2-cyclotryptophan; partial moiety is linked to residue W70. A cross-link (cyclopeptide (Trp-Pro)) is located at residues 70 to 80 (WLNGDNNWSTP). A D-leucine; partial modification is found at L71. The 3'-prenyl-2',N2-cyclotryptophan; partial moiety is linked to residue W77. Residues 81–87 (FAADGAE) constitute a propeptide that is removed on maturation.

Post-translationally, kawaguchipeptin A contains a D-Leu and 2 prenylated Trp, whereas kawaguchipeptin B only contains unmodified amino acids. In terms of processing, kawaguchipeptin A is prenylated in vivo. Upon expression in E.coli of the whole operon, Trp residues are prenylated by C-prenyltransferase KgpF. Prenylation by KgpF is likely the last enzymatic step in the biosynthetic maturation of kawaguchipeptin A.

In terms of biological role, both kawaguchipeptin A and B, which only differ by post-translational modifications, have antibacterial activities, since they inhibit the growth of the Gram-positive bacterium S.aureus at a concentration of 1 ug/mL. The chain is Kawaguchipeptin peptide from Microcystis aeruginosa (strain NIES-88 / KW-MA1-3).